We begin with the raw amino-acid sequence, 384 residues long: Cytochrome b (384 aa).

Helical transmembrane passes span 32-52 (FGSL…FLAM), 76-98 (WLLR…LHMA), 113-133 (LWNM…MGYC), and 179-199 (FFSL…LHLL). Residues histidine 82 and histidine 96 each contribute to the heme b site. Histidine 183 and histidine 197 together coordinate heme b. Histidine 202 is a binding site for a ubiquinone. Transmembrane regions (helical) follow at residues 225-245 (FLFK…FLIS), 289-309 (MMGV…PFVD), 321-341 (LSKI…LIGA), and 348-368 (YIII…ILLP).

Belongs to the cytochrome b family. As to quaternary structure, fungal cytochrome b-c1 complex contains 10 subunits; 3 respiratory subunits, 2 core proteins and 5 low-molecular weight proteins. Cytochrome b-c1 complex is a homodimer. Requires heme b as cofactor.

The protein localises to the mitochondrion inner membrane. Functionally, component of the ubiquinol-cytochrome c reductase complex (complex III or cytochrome b-c1 complex) that is part of the mitochondrial respiratory chain. The b-c1 complex mediates electron transfer from ubiquinol to cytochrome c. Contributes to the generation of a proton gradient across the mitochondrial membrane that is then used for ATP synthesis. This Starmerella bacillaris (Yeast) protein is Cytochrome b (COB).